The chain runs to 365 residues: Chaperone protein DnaJ (365 aa).

In terms of domain architecture, J spans 5–71 (DFYEILGIAK…QKRQAYDQFG (67 aa)). A CR-type zinc finger spans residues 128-206 (GTTVKIRIPK…CHGKGVVHKQ (79 aa)). 8 residues coordinate Zn(2+): C141, C144, C158, C161, C180, C183, C194, and C197. CXXCXGXG motif repeat units follow at residues 141–148 (CDTCSGTG), 158–165 (CLTCGGAG), 180–187 (CNACSGTG), and 194–201 (CNNCHGKG).

This sequence belongs to the DnaJ family. Homodimer. Zn(2+) is required as a cofactor.

Its subcellular location is the cytoplasm. Functionally, participates actively in the response to hyperosmotic and heat shock by preventing the aggregation of stress-denatured proteins and by disaggregating proteins, also in an autonomous, DnaK-independent fashion. Unfolded proteins bind initially to DnaJ; upon interaction with the DnaJ-bound protein, DnaK hydrolyzes its bound ATP, resulting in the formation of a stable complex. GrpE releases ADP from DnaK; ATP binding to DnaK triggers the release of the substrate protein, thus completing the reaction cycle. Several rounds of ATP-dependent interactions between DnaJ, DnaK and GrpE are required for fully efficient folding. Also involved, together with DnaK and GrpE, in the DNA replication of plasmids through activation of initiation proteins. The sequence is that of Chaperone protein DnaJ from Vesicomyosocius okutanii subsp. Calyptogena okutanii (strain HA).